The following is a 431-amino-acid chain: Chaperone SurA (431 aa).

The first 20 residues, 1–20 (MKNWRTLILGLALSASTAFA), serve as a signal peptide directing secretion. PpiC domains follow at residues 171–272 (NDEL…KVND) and 282–382 (VTET…QLLD).

The protein localises to the periplasm. The catalysed reaction is [protein]-peptidylproline (omega=180) = [protein]-peptidylproline (omega=0). Chaperone involved in the correct folding and assembly of outer membrane proteins. Recognizes specific patterns of aromatic residues and the orientation of their side chains, which are found more frequently in integral outer membrane proteins. May act in both early periplasmic and late outer membrane-associated steps of protein maturation. The polypeptide is Chaperone SurA (Pectobacterium atrosepticum (strain SCRI 1043 / ATCC BAA-672) (Erwinia carotovora subsp. atroseptica)).